The chain runs to 464 residues: L-2-hydroxyglutarate dehydrogenase, mitochondrial (464 aa).

Residues 1 to 52 (MWPTLRYVGGVCGLARYCVAGGFLRASGPASGVPGLLCGGGRRSSSTSSFDI) constitute a mitochondrion transit peptide. N6-acetyllysine occurs at positions 105 and 174.

This sequence belongs to the L2HGDH family. It depends on FAD as a cofactor.

The protein resides in the mitochondrion. It carries out the reaction (S)-2-hydroxyglutarate + A = 2-oxoglutarate + AH2. This is L-2-hydroxyglutarate dehydrogenase, mitochondrial (L2hgdh) from Mus musculus (Mouse).